We begin with the raw amino-acid sequence, 348 residues long: Uroporphyrinogen decarboxylase (348 aa).

Substrate-binding positions include 27–31, phenylalanine 46, aspartate 76, tyrosine 152, serine 207, and histidine 320; that span reads RQAGR.

Belongs to the uroporphyrinogen decarboxylase family. As to quaternary structure, homodimer.

The protein localises to the cytoplasm. The enzyme catalyses uroporphyrinogen III + 4 H(+) = coproporphyrinogen III + 4 CO2. It participates in porphyrin-containing compound metabolism; protoporphyrin-IX biosynthesis; coproporphyrinogen-III from 5-aminolevulinate: step 4/4. Functionally, catalyzes the decarboxylation of four acetate groups of uroporphyrinogen-III to yield coproporphyrinogen-III. The protein is Uroporphyrinogen decarboxylase of Bacillus cytotoxicus (strain DSM 22905 / CIP 110041 / 391-98 / NVH 391-98).